The primary structure comprises 504 residues: Crh-like protein CRH12 (504 aa).

An N-terminal signal peptide occupies residues 1-18 (MYKQILTFLILFLRYILS). One can recognise a GH16 domain in the interval 19-270 (EFPDDPYEDD…YSKALTYSYG (252 aa)). Asn34 carries an N-linked (GlcNAc...) asparagine glycan. Cysteines 43 and 51 form a disulfide. Glu138 acts as the Nucleophile in catalysis. Residue Glu143 is the Proton donor of the active site. Glu143 contributes to the chitin binding site. N-linked (GlcNAc...) asparagine glycosylation occurs at Asn161. Residues Lys221, Trp225, and Thr234 each coordinate chitin. Residues 304–404 (KPTPKQETDD…LDISTQLPPL (101 aa)) form a disordered region. A compositionally biased stretch (polar residues) spans 316–329 (VLTSSKSQRVATTI). The span at 356-378 (WETEQDETGTDDTENSDNEEEES) shows a compositional bias: acidic residues. N-linked (GlcNAc...) asparagine glycosylation is found at Asn407, Asn416, and Asn425. The GPI-anchor amidated glycine moiety is linked to residue Gly479. Residues 480-504 (VSSILATSFSSVVIAEILVIVVLLL) constitute a propeptide, removed in mature form.

This sequence belongs to the glycosyl hydrolase 16 family. CRH1 subfamily. Post-translationally, the GPI-anchor is attached to the protein in the endoplasmic reticulum and serves to target the protein to the cell surface. There, the glucosamine-inositol phospholipid moiety is cleaved off and the GPI-modified mannoprotein is covalently attached via its lipidless GPI glycan remnant to the 1,6-beta-glucan of the outer cell wall layer.

It is found in the secreted. The protein resides in the cell wall. The protein localises to the membrane. It carries out the reaction Random endo-hydrolysis of N-acetyl-beta-D-glucosaminide (1-&gt;4)-beta-linkages in chitin and chitodextrins.. Its function is as follows. Dual chitinase/transglycosylase that plays a role in cell wall architecture. Chitinase and transglycosylase activities are coupled. Required for the polysaccharide cross-linking at the septa and the cell wall. More specifically, transfers chitin to 1,6-beta-glucan in the cell wall. Plays an important role in fungal pathogenesis via its functions in cell wall assembly and regeneration, filamentation, and adherence to host cells. This is Crh-like protein CRH12 (CRH12) from Candida albicans (strain SC5314 / ATCC MYA-2876) (Yeast).